The primary structure comprises 345 residues: Fructose-bisphosphate aldolase, plasmid (345 aa).

Residue Ser50 coordinates D-glyceraldehyde 3-phosphate. Asp83 acts as the Proton donor in catalysis. Residues His84, Asp105, Glu142, and His198 each contribute to the Zn(2+) site. A dihydroxyacetone phosphate-binding site is contributed by Gly199. His232 serves as a coordination point for Zn(2+). Dihydroxyacetone phosphate-binding positions include 233–235 (GSS) and 275–278 (NIDT).

Belongs to the class II fructose-bisphosphate aldolase family. Homodimer. The cofactor is Zn(2+).

The catalysed reaction is beta-D-fructose 1,6-bisphosphate = D-glyceraldehyde 3-phosphate + dihydroxyacetone phosphate. Its pathway is carbohydrate biosynthesis; Calvin cycle. It functions in the pathway carbohydrate degradation; glycolysis; D-glyceraldehyde 3-phosphate and glycerone phosphate from D-glucose: step 4/4. Functionally, catalyzes the aldol condensation of dihydroxyacetone phosphate (DHAP or glycerone-phosphate) with glyceraldehyde 3-phosphate (G3P) to form fructose 1,6-bisphosphate (FBP) in gluconeogenesis and the reverse reaction in glycolysis. This Cupriavidus necator (strain ATCC 17699 / DSM 428 / KCTC 22496 / NCIMB 10442 / H16 / Stanier 337) (Ralstonia eutropha) protein is Fructose-bisphosphate aldolase, plasmid (cbbAP).